The chain runs to 729 residues: Neurochondrin (729 aa).

S2 is subject to N-acetylserine. S2 carries the post-translational modification Phosphoserine. 2 S-palmitoyl cysteine lipidation sites follow: C3 and C4. An Asymmetric dimethylarginine modification is found at R75. A Phosphoserine modification is found at S448.

Belongs to the neurochondrin family. Interacts with MCHR1. Interacts with SEMA4C. Interacts with DIAPH1 (via FH3 domain). Interacts with GRM5. In terms of processing, palmitoylated. Palmitoylation by ZDHHC1, ZDHHC3 and ZDHHC11 regulates the association of NCDN with endosome membranes. May also be palmitoylated by ZDHHC7. In terms of tissue distribution, expressed in the neuronal, chondral and bone tissues. Expressed in dendrites. Enriched in the brain in the surface layer I-IV. In brains, protein level increases in male but decreases in female with advancing age (at protein level). In adult brains, it is highly expressed in the forebrain and hindbrain. Highly expressed in the hippocampus, piriform cortex, septum, amygdaloid complex, medial geniculate nucleus, inferior colliculus, cerebellar nuclei and the nuclei of the Vth, VIIth, and XIIth cranial nerves. In bone tissues, it is expressed in osteoblasts and osteocytes.

Its subcellular location is the cytoplasm. It localises to the cytosol. The protein resides in the endosome membrane. The protein localises to the cell projection. It is found in the dendrite. Its subcellular location is the postsynapse. Probably involved in signal transduction, in the nervous system, via increasing cell surface localization of GRM5 and positively regulating its signaling. Required for the spatial learning process. Acts as a negative regulator of Ca(2+)-calmodulin-dependent protein kinase 2 (CaMK2) phosphorylation. May play a role in modulating melanin-concentrating hormone-mediated functions via its interaction with MCHR1 that interferes with G protein-coupled signal transduction. May be involved in bone metabolism. May also be involved in neurite outgrowth. The protein is Neurochondrin (Ncdn) of Mus musculus (Mouse).